A 150-amino-acid chain; its full sequence is Large ribosomal subunit protein bL9 (150 aa).

Belongs to the bacterial ribosomal protein bL9 family.

Functionally, binds to the 23S rRNA. The sequence is that of Large ribosomal subunit protein bL9 from Streptococcus mutans serotype c (strain ATCC 700610 / UA159).